A 784-amino-acid chain; its full sequence is Repetin (784 aa).

The tract at residues 1–91 (MAQLLNSILS…VQACYHKLDN (91 aa)) is S-100-like. EF-hand domains lie at 13-48 (DVFHKYAKGNGDCALLCKEELKQLLLAEFGDILQRP) and 49-84 (NDPETVETILNLLDQDRDGHIDFHEYLLLVFQLVQA). Glu32, Asp62, Asp64, Asp66, His68, and Glu73 together coordinate Ca(2+). Disordered stretches follow at residues 92-221 (KSHG…QAKW), 282-584 (GCGQ…SHYI), 601-661 (TEGT…HQHK), and 677-784 (RDWQ…NHQR). A compositionally biased stretch (basic and acidic residues) spans 124–201 (RHEEERQNSH…FSFDQSERQS (78 aa)). Composition is skewed to polar residues over residues 286–296 (TDRQGQSSHYG), 304–343 (SYHYGQTDRQGQSSHYSQTDRQGQSSHYSQPDRQGQSSHY), 356–392 (DQTNRQGQGSHYSQPNRQGQSSHYGQPDTQDQSSHYG), 400–486 (SSHY…QSSH), 504–584 (GQGQ…SHYI), 610–646 (VEQSGRSGRLSQQTPGQEGYQNQGQGFQSRDSQQNGH), and 680–695 (QSCSSEQGHRQAQTRQ). 2 stretches are compositionally biased toward basic and acidic residues: residues 704–722 (WAEEEQGHQTWDRHSHESQ) and 729–784 (QDRR…NHQR).

It belongs to the S100-fused protein family. Potential substrate of transglutaminase. Some arginines are probably converted to citrullines by peptidylarginine deimidase. In terms of tissue distribution, expression is scattered in the normal epidermis but strong in the acrosyringium, the inner hair root sheath and in the filiform papilli of the tongue.

The protein localises to the secreted. Its subcellular location is the extracellular space. The protein resides in the extracellular matrix. Involved in the cornified cell envelope formation. Multifunctional epidermal matrix protein. Reversibly binds calcium. This is Repetin (RPTN) from Homo sapiens (Human).